Here is a 409-residue protein sequence, read N- to C-terminus: Aspartate aminotransferase, cytoplasmic (409 aa).

An N-acetylserine modification is found at S2. L-aspartate contacts are provided by G38, W138, and N191. N6-(pyridoxal phosphate)lysine is present on K255. R383 contacts L-aspartate. A Phosphoserine modification is found at S385.

The protein belongs to the class-I pyridoxal-phosphate-dependent aminotransferase family. In terms of assembly, homodimer. Pyridoxal 5'-phosphate is required as a cofactor.

The protein resides in the cytoplasm. The catalysed reaction is L-aspartate + 2-oxoglutarate = oxaloacetate + L-glutamate. Functionally, plays a key role in amino acid metabolism. The polypeptide is Aspartate aminotransferase, cytoplasmic (Schizosaccharomyces pombe (strain 972 / ATCC 24843) (Fission yeast)).